The chain runs to 586 residues: MRKTKIVCTIGPASESEEMLEKLIKAGMNVARLNFSHGDQAEHKARIDTIRKVSKRLGKTVAILLDTKGPEIRTHNMKDGLIELEKGSEVTVSMTEVEGTPEKFSVTYENLINDVEEGSYILLDDGLIELQVKSIDKANGEVLCDVLNTGELKNKKGVNLPGVKVSLPGITDKDADDINFGISEGVDFIAASFVRRPSDVLDIRKLLEAKQNKNISIIPKIENQEGIDNIKEILEVSDGLMVARGDMGVEIPPESVPMVQKDLIRQCNKLGKPVITATQMLDSMQRNPRATRAEASDVANAIYDGTDAVMLSGETAAGQYPEEAVKTMRNIAVSAEAAQDYKKLLSDRTKLVETSLVNAIGVSVAHTALNLNVKAIVAATESGSTARTISKYRPQSDIIAVTPNAETARQCALVWGIFPVVKEGRKTTDALLNNAVATAVETERVQNGDLIIITAGVPTGEKGTTNMMKLHLVGDELAKGQGIGRSSVVGKTLVVKDASELEGKDLSESIIVTSSVDETLVPYIENAIGLITEENGITSPSAIIGLEKGIPTVVGVENATSEIQSDVLITVDANQGKIFEGYANVL.

Residue Arg32 coordinates substrate. Residues Asn34, Ser36, Asp66, and Thr67 each coordinate K(+). Residue 34–37 participates in ATP binding; that stretch reads NFSH. ATP contacts are provided by Arg73 and Lys156. A Mg(2+)-binding site is contributed by Glu222. Substrate contacts are provided by Gly245, Asp246, and Thr278. Asp246 provides a ligand contact to Mg(2+).

The protein belongs to the pyruvate kinase family. It in the C-terminal section; belongs to the PEP-utilizing enzyme family. Mg(2+) is required as a cofactor. The cofactor is K(+).

The catalysed reaction is pyruvate + ATP = phosphoenolpyruvate + ADP + H(+). It participates in carbohydrate degradation; glycolysis; pyruvate from D-glyceraldehyde 3-phosphate: step 5/5. This is Pyruvate kinase (pyk) from Staphylococcus saprophyticus subsp. saprophyticus (strain ATCC 15305 / DSM 20229 / NCIMB 8711 / NCTC 7292 / S-41).